The sequence spans 283 residues: 5'-nucleotidase SurE (283 aa).

Residues Asp-14, Asp-15, Ser-47, and Asn-105 each contribute to the a divalent metal cation site.

Belongs to the SurE nucleotidase family. Requires a divalent metal cation as cofactor.

Its subcellular location is the cytoplasm. The enzyme catalyses a ribonucleoside 5'-phosphate + H2O = a ribonucleoside + phosphate. In terms of biological role, nucleotidase that shows phosphatase activity on nucleoside 5'-monophosphates. This chain is 5'-nucleotidase SurE, found in Chlamydia trachomatis serovar A (strain ATCC VR-571B / DSM 19440 / HAR-13).